We begin with the raw amino-acid sequence, 395 residues long: Probable FMNH2-dependent monooxygenase SfnC (395 aa).

Functionally, involved in the dimethyl sulfide degradation pathway. The sequence is that of Probable FMNH2-dependent monooxygenase SfnC from Pseudomonas putida (Arthrobacter siderocapsulatus).